The following is a 490-amino-acid chain: Zinc finger protein STP4 (490 aa).

Composition is skewed to low complexity over residues 1–16 (MLVS…SVMS) and 52–73 (PSLP…STLN). The tract at residues 1–85 (MLVSSSFASS…PPPPLTTSYS (85 aa)) is disordered. A phosphoserine mark is found at Ser-153 and Ser-155. The segment covering 231-247 (QQQQQLNSSSSASALPS) has biased composition (low complexity). A disordered region spans residues 231-273 (QQQQQLNSSSSASALPSIHSPLTNEHTSRYSSSLKDSAKITKQ). Over residues 250–265 (SPLTNEHTSRYSSSLK) the composition is skewed to polar residues. The C2H2-type zinc finger occupies 304-326 (HKCPICQRGFARNNDLIRHKKRH). Residues 338–375 (ESDNNSGADDQDDTARTSANNDSDDSNDKLAASSSSEE) form a disordered region.

The protein resides in the cytoplasm. Its subcellular location is the mitochondrion. The protein localises to the nucleus. This Saccharomyces cerevisiae (strain ATCC 204508 / S288c) (Baker's yeast) protein is Zinc finger protein STP4 (STP4).